A 313-amino-acid chain; its full sequence is Acetyl-coenzyme A carboxylase carboxyl transferase subunit alpha (313 aa).

The CoA carboxyltransferase C-terminal domain occupies 30–291 (DLDREISDLE…KMALLQELAF (262 aa)).

It belongs to the AccA family. As to quaternary structure, acetyl-CoA carboxylase is a heterohexamer composed of biotin carboxyl carrier protein (AccB), biotin carboxylase (AccC) and two subunits each of ACCase subunit alpha (AccA) and ACCase subunit beta (AccD).

It localises to the cytoplasm. The catalysed reaction is N(6)-carboxybiotinyl-L-lysyl-[protein] + acetyl-CoA = N(6)-biotinyl-L-lysyl-[protein] + malonyl-CoA. It functions in the pathway lipid metabolism; malonyl-CoA biosynthesis; malonyl-CoA from acetyl-CoA: step 1/1. Its function is as follows. Component of the acetyl coenzyme A carboxylase (ACC) complex. First, biotin carboxylase catalyzes the carboxylation of biotin on its carrier protein (BCCP) and then the CO(2) group is transferred by the carboxyltransferase to acetyl-CoA to form malonyl-CoA. This chain is Acetyl-coenzyme A carboxylase carboxyl transferase subunit alpha, found in Zymomonas mobilis subsp. mobilis (strain ATCC 31821 / ZM4 / CP4).